The chain runs to 87 residues: Putative acyl-CoA-binding protein (87 aa).

The ACB domain maps to 1-86; it reads MSSTFEQAAA…VDELKTKYGM (86 aa). An acyl-CoA is bound by residues Lys-13, 28 to 32, Lys-50, Lys-54, and Tyr-73; that span reads YALFK.

It belongs to the ACBP family.

Its subcellular location is the cytoplasm. It localises to the nucleus. In terms of biological role, binds medium- and long-chain acyl-CoA esters with very high affinity and may function as an intracellular carrier of acyl-CoA esters. May enhance the activity of the ceramide synthase complex. The protein is Putative acyl-CoA-binding protein of Schizosaccharomyces pombe (strain 972 / ATCC 24843) (Fission yeast).